Reading from the N-terminus, the 339-residue chain is MTIRVAINGFGRIGRNVLRALYESGKRAEISVVAINELADATGIAHLLKYDSSHGRFAWDIRVNNDLLQVGDDAIRLFHHADIADLPWGELGIDVVLDCSGVYGSRADGEAHIAQGAKKVLFSHPGTIDLDATVVFGVNQHELKKQHRIVSNASCTTNCIIPIIKMMDDAFGIESGTVTTIHAAMNDQPVIDAYHKDLRRTRAAGQSIIPVDTKLAAGITRIFPKFKDHFEAISVRVPTINVTAIDLSVTVKNAVNVLDVNKLIQKSATGAFRGIVDYTELPLVSTDFNHDPHSAIVDGTQTRVSGQHLIKTLVWCDNEWGFANRMLDTTLAMAATGFK.

Residue 12-13 (RI) coordinates NAD(+). Substrate-binding positions include 154–156 (SCT), Arg-200, 213–214 (TK), and Arg-236. Residue Cys-155 is the Nucleophile of the active site. Residue Asn-318 participates in NAD(+) binding.

It belongs to the glyceraldehyde-3-phosphate dehydrogenase family. Epd subfamily. In terms of assembly, homotetramer.

It is found in the cytoplasm. The catalysed reaction is D-erythrose 4-phosphate + NAD(+) + H2O = 4-phospho-D-erythronate + NADH + 2 H(+). It participates in cofactor biosynthesis; pyridoxine 5'-phosphate biosynthesis; pyridoxine 5'-phosphate from D-erythrose 4-phosphate: step 1/5. Functionally, catalyzes the NAD-dependent conversion of D-erythrose 4-phosphate to 4-phosphoerythronate. In Proteus mirabilis (strain HI4320), this protein is D-erythrose-4-phosphate dehydrogenase.